The primary structure comprises 393 residues: Leucine aminopeptidase 1 (393 aa).

The signal sequence occupies residues 1-18 (MKLSQVSALAACVPAATA). Residues 19-84 (RFVELMEADH…GSQGLRIKES (66 aa)) constitute a propeptide that is removed on maturation. N-linked (GlcNAc...) asparagine glycosylation occurs at N176. Zn(2+) is bound by residues H184, D202, E241, and D268. A disulfide bridge links C317 with C321. H350 provides a ligand contact to Zn(2+).

This sequence belongs to the peptidase M28 family. M28E subfamily. As to quaternary structure, monomer. It depends on Zn(2+) as a cofactor.

Its subcellular location is the secreted. Extracellular aminopeptidase that allows assimilation of proteinaceous substrates. In Metarhizium robertsii (strain ARSEF 23 / ATCC MYA-3075) (Metarhizium anisopliae (strain ARSEF 23)), this protein is Leucine aminopeptidase 1 (LAP1).